A 310-amino-acid polypeptide reads, in one-letter code: Small ribosomal subunit biogenesis GTPase RsgA (310 aa).

The CP-type G domain occupies 77–236; sequence KNELKRPNIA…IADTPGFSKL (160 aa). GTP-binding positions include 126–129 and 179–187; these read SKID and GQTGVGKST. Zn(2+) contacts are provided by cysteine 260, cysteine 266, histidine 268, and cysteine 274.

Belongs to the TRAFAC class YlqF/YawG GTPase family. RsgA subfamily. In terms of assembly, monomer. Associates with 30S ribosomal subunit, binds 16S rRNA. The cofactor is Zn(2+).

It is found in the cytoplasm. One of several proteins that assist in the late maturation steps of the functional core of the 30S ribosomal subunit. Helps release RbfA from mature subunits. May play a role in the assembly of ribosomal proteins into the subunit. Circularly permuted GTPase that catalyzes slow GTP hydrolysis, GTPase activity is stimulated by the 30S ribosomal subunit. The protein is Small ribosomal subunit biogenesis GTPase RsgA of Phytoplasma australiense.